The sequence spans 155 residues: Small ribosomal subunit protein uS7 (155 aa).

It belongs to the universal ribosomal protein uS7 family. Part of the 30S ribosomal subunit. Contacts proteins S9 and S11.

Its function is as follows. One of the primary rRNA binding proteins, it binds directly to 16S rRNA where it nucleates assembly of the head domain of the 30S subunit. Is located at the subunit interface close to the decoding center, probably blocks exit of the E-site tRNA. This Mycoplasma genitalium (strain ATCC 33530 / DSM 19775 / NCTC 10195 / G37) (Mycoplasmoides genitalium) protein is Small ribosomal subunit protein uS7.